Reading from the N-terminus, the 121-residue chain is Large ribosomal subunit protein bL12 (121 aa).

It belongs to the bacterial ribosomal protein bL12 family. As to quaternary structure, homodimer. Part of the ribosomal stalk of the 50S ribosomal subunit. Forms a multimeric L10(L12)X complex, where L10 forms an elongated spine to which 2 to 4 L12 dimers bind in a sequential fashion. Binds GTP-bound translation factors.

Forms part of the ribosomal stalk which helps the ribosome interact with GTP-bound translation factors. Is thus essential for accurate translation. The chain is Large ribosomal subunit protein bL12 from Shewanella piezotolerans (strain WP3 / JCM 13877).